Reading from the N-terminus, the 104-residue chain is Pterin-4-alpha-carbinolamine dehydratase (104 aa).

Alanine 2 carries the N-acetylalanine modification. Residues 61–63 (DHH) and 78–81 (STHE) contribute to the substrate site.

Belongs to the pterin-4-alpha-carbinolamine dehydratase family. As to quaternary structure, homotetramer and homodimer. Heterotetramer with HNF1A; formed by a dimer of dimers. Interacts with HNF1B (via HNF-p1 domain); the interaction increases HNF1B transactivation activity. Mainly expressed in the liver, in pancreatic cells, and in the kidney, especially in the distal convoluted tubule, in the cortical thick ascending limb of Henle's loop and in the connecting tubule.

The protein resides in the cytoplasm. It localises to the nucleus. It carries out the reaction (4aS,6R)-4a-hydroxy-L-erythro-5,6,7,8-tetrahydrobiopterin = (6R)-L-erythro-6,7-dihydrobiopterin + H2O. In terms of biological role, involved in tetrahydrobiopterin biosynthesis. Seems to both prevent the formation of 7-pterins and accelerate the formation of quinonoid-BH2. Coactivator for HNF1A-dependent transcription. Regulates the dimerization of homeodomain protein HNF1A and enhances its transcriptional activity. Also acts as a coactivator for HNF1B-dependent transcription. The sequence is that of Pterin-4-alpha-carbinolamine dehydratase (Pcbd1) from Mus musculus (Mouse).